Here is a 158-residue protein sequence, read N- to C-terminus: Hypoxanthine DNA glycosylase (158 aa).

Asn39 is an active-site residue.

Belongs to the uracil-DNA glycosylase (UDG) superfamily. Type 6 (HDG) family.

Functionally, excises hypoxanthine, a deamination product of adenine, from double-stranded DNA. Acts on double-stranded DNA containing G/I, T/I, A/I and C/I base pairs, but not on single-stranded inosine-containing DNA. Also has minor xanthine DNA glycosylase activity. Lacks any detectable uracil-DNA glycosylase activity. This is Hypoxanthine DNA glycosylase from Methanosarcina acetivorans (strain ATCC 35395 / DSM 2834 / JCM 12185 / C2A).